The primary structure comprises 128 residues: MASKATKTTQSKYAIINNQLRNDLPDFTSGDTIKVDVKIKEGEKFRIQTFEGLVIKTQGSGITYSVVVRKLSNGVFVERTFPLHSPIIDKVTIVKRGRVRRARIYYIRKLSGKAARIKEILPTKADKK.

This sequence belongs to the bacterial ribosomal protein bL19 family.

In terms of biological role, this protein is located at the 30S-50S ribosomal subunit interface and may play a role in the structure and function of the aminoacyl-tRNA binding site. This Mesoplasma florum (strain ATCC 33453 / NBRC 100688 / NCTC 11704 / L1) (Acholeplasma florum) protein is Large ribosomal subunit protein bL19.